We begin with the raw amino-acid sequence, 390 residues long: 5-hydroxytryptamine receptor 1B (390 aa).

Residues 1–46 (MEEPGAQCAPPPPAGSETWVPQANLSSAPSQNCSAKDYIYQDSISL) lie on the Extracellular side of the membrane. Asn-24 and Asn-32 each carry an N-linked (GlcNAc...) asparagine glycan. Residues 47 to 72 (PWKVLLVMLLALITLATTLSNAFVIA) traverse the membrane as a helical segment. Over 73–86 (TVYRTRKLHTPANY) the chain is Cytoplasmic. The chain crosses the membrane as a helical span at residues 87–111 (LIASLAVTDLLVSILVMPISTMYTV). Over 112–119 (TGRWTLGQ) the chain is Extracellular. Residues 120–145 (VVCDFWLSSDITCCTASILHLCVIAL) form a helical membrane-spanning segment. A disulfide bridge links Cys-122 with Cys-199. Ergotamine is bound by residues Asp-129 and Thr-134. The DRY motif; important for ligand-induced conformation changes and signaling motif lies at 146-148 (DRY). Over 146-165 (DRYWAITDAVEYSAKRTPKR) the chain is Cytoplasmic. Residues 166–184 (AAVMIALVWVFSISISLPP) traverse the membrane as a helical segment. At 185–205 (FFWRQAKAEEEVSECVVNTDH) the chain is on the extracellular side. Position 201 (Val-201) interacts with ergotamine. Residues 206–229 (ILYTVYSTVGAFYFPTLLLIALYG) traverse the membrane as a helical segment. Over 230–315 (RIYVEARSRI…AARERKATKT (86 aa)) the chain is Cytoplasmic. The span at 259–272 (DSPGSTSSVTSINS) shows a compositional bias: polar residues. The interval 259 to 281 (DSPGSTSSVTSINSRVPDVPSES) is disordered. Residues 316 to 337 (LGIILGAFIVCWLPFFIISLVM) form a helical membrane-spanning segment. Residues 338–347 (PICKDACWFH) are Extracellular-facing. Residues 348 to 370 (LAIFDFFTWLGYLNSLINPIIYT) form a helical membrane-spanning segment. Positions 365 to 369 (NPIIY) match the NPxxY motif; important for ligand-induced conformation changes and signaling motif. The Cytoplasmic segment spans residues 371–390 (MSNEDFKQAFHKLIRFKCTS). A lipid anchor (S-palmitoyl cysteine) is attached at Cys-388.

It belongs to the G-protein coupled receptor 1 family. In terms of assembly, homodimer. Heterodimer with HTR1D. Post-translationally, phosphorylated. Desensitization of the receptor may be mediated by its phosphorylation. Palmitoylated. Detected in cerebral artery smooth muscle cells (at protein level). Detected in brain cortex, striatum, amygdala, medulla, hippocampus, caudate nucleus and putamen.

It is found in the cell membrane. In terms of biological role, G-protein coupled receptor for 5-hydroxytryptamine (serotonin). Also functions as a receptor for ergot alkaloid derivatives, various anxiolytic and antidepressant drugs and other psychoactive substances, such as lysergic acid diethylamide (LSD). Ligand binding causes a conformation change that triggers signaling via guanine nucleotide-binding proteins (G proteins) and modulates the activity of downstream effectors, such as adenylate cyclase. HTR1B is coupled to G(i)/G(o) G alpha proteins and mediates inhibitory neurotransmission by inhibiting adenylate cyclase activity. Arrestin family members inhibit signaling via G proteins and mediate activation of alternative signaling pathways. Regulates the release of 5-hydroxytryptamine, dopamine and acetylcholine in the brain, and thereby affects neural activity, nociceptive processing, pain perception, mood and behavior. Besides, plays a role in vasoconstriction of cerebral arteries. This Homo sapiens (Human) protein is 5-hydroxytryptamine receptor 1B.